The primary structure comprises 998 residues: Regulator of telomere elongation helicase 1 homolog (998 aa).

The region spanning 7–324 is the Helicase ATP-binding domain; the sequence is AGIPVHFPFE…KEMLLELEKA (318 aa). 42–49 contributes to the ATP binding site; that stretch reads SPTGTGKT. [4Fe-4S] cluster-binding residues include Cys148, Cys166, Cys175, and Cys211. A DEAH box motif is present at residues 254-257; that stretch reads DEAH. The disordered stretch occupies residues 426–454; that stretch reads QNAGKPAPKQQQQGGWLGKGNNTSNSSSS. Thr887 carries the post-translational modification Phosphothreonine.

This sequence belongs to the helicase family. RAD3/XPD subfamily.

The protein localises to the nucleus. It carries out the reaction ATP + H2O = ADP + phosphate + H(+). Its function is as follows. A probable ATP-dependent DNA helicase implicated in DNA repair and the maintenance of genomic stability. Acts as an anti-recombinase to counteract toxic recombination and limit crossover during meiosis. Regulates meiotic recombination and crossover homeostasis by physically dissociating strand invasion events and thereby promotes noncrossover repair by meiotic synthesis dependent strand annealing (SDSA) as well as disassembly of D loop recombination intermediates. This chain is Regulator of telomere elongation helicase 1 homolog, found in Drosophila willistoni (Fruit fly).